The primary structure comprises 173 residues: ATP synthase subunit b (173 aa).

The chain crosses the membrane as a helical span at residues 15-35 (LYVGDMLFYAILFIVLMALIA).

The protein belongs to the ATPase B chain family. As to quaternary structure, F-type ATPases have 2 components, F(1) - the catalytic core - and F(0) - the membrane proton channel. F(1) has five subunits: alpha(3), beta(3), gamma(1), delta(1), epsilon(1). F(0) has three main subunits: a(1), b(2) and c(10-14). The alpha and beta chains form an alternating ring which encloses part of the gamma chain. F(1) is attached to F(0) by a central stalk formed by the gamma and epsilon chains, while a peripheral stalk is formed by the delta and b chains.

Its subcellular location is the cell membrane. In terms of biological role, f(1)F(0) ATP synthase produces ATP from ADP in the presence of a proton or sodium gradient. F-type ATPases consist of two structural domains, F(1) containing the extramembraneous catalytic core and F(0) containing the membrane proton channel, linked together by a central stalk and a peripheral stalk. During catalysis, ATP synthesis in the catalytic domain of F(1) is coupled via a rotary mechanism of the central stalk subunits to proton translocation. Functionally, component of the F(0) channel, it forms part of the peripheral stalk, linking F(1) to F(0). In Pediococcus pentosaceus (strain ATCC 25745 / CCUG 21536 / LMG 10740 / 183-1w), this protein is ATP synthase subunit b.